The primary structure comprises 96 residues: Protein ORF5 (96 aa).

Belongs to the microviridae C protein family.

Its function is as follows. Plays a central role in the packaging of viral DNA into phage procapsid, which occurs in the late stage of infection. Can interact with the replicative complex after the completion of one round of DNA synthesis. When protein ORF5 is bound to the replicative form, the complex becomes accessible to procapsid and serves as a DNA packaging apparatus. This chain is Protein ORF5, found in Chlamydia phage 1 (Bacteriophage Chp1).